Here is a 149-residue protein sequence, read N- to C-terminus: Ricin B-like lectin (149 aa).

Position 2 is an N-acetylserine (S2). D21, G24, N39, and N47 together coordinate a carbohydrate. The involved in dimerization stretch occupies residues 110–112 (PNL).

In terms of assembly, homodimer. The N-terminus is blocked.

Its function is as follows. Lectin specific for terminal, non-reducing N-acetylgalactosamine (Gal-NAc)-containing carbohydrates including N,N'-diacetyllactosediamine/LDN (GalNAcbeta1-4GlcNAc, LacdiNAc). Specific also for carbohydrates containing N-acetylglucosamine (-GlcNAc) or N-acetyllactosamine (-Galbeta1-4GlcNAc) at the reducing end. Agglutinates human blood group A, AB, B and O erythrocytes with a strong preference for group A. Agglutinates bovine erythrocytes with a very low specificity. Binds carbohydrates bivalently, which is required for its biological activity. Exhibits insecticidal activity against the fruit fly D.melanogaster, mosquito A.aegypti, and amoebozoa A.castellanii. Has anti-nutritional activity against Colorado potato beetle L.decemlineata, and against worm C.elegans. Has antiproliferative activity against human leukemic T-cells. Has an immunostimulatory effect on human antigen-presenting dendritic cells, which are subsequently able to induce efficient T-cell immune responses. This is Ricin B-like lectin from Clitocybe nebularis (Clouded agaric).